The following is a 672-amino-acid chain: Peptidoglycan D,D-transpeptidase MrdA (672 aa).

The helical transmembrane segment at isoleucine 21–tyrosine 41 threads the bilayer. The Acyl-ester intermediate role is filled by serine 326. Residues aspartate 350, aspartate 365, histidine 371, and cysteine 384 each coordinate Zn(2+). A disordered region spans residues alanine 616 to glutamate 672. Positions serine 640–glutamate 672 are enriched in low complexity.

The protein belongs to the transpeptidase family. MrdA subfamily. Monomer. It depends on Zn(2+) as a cofactor.

It localises to the cell inner membrane. The enzyme catalyses Preferential cleavage: (Ac)2-L-Lys-D-Ala-|-D-Ala. Also transpeptidation of peptidyl-alanyl moieties that are N-acyl substituents of D-alanine.. It functions in the pathway cell wall biogenesis; peptidoglycan biosynthesis. Its activity is regulated as follows. Inhibited by the beta-lactams sulbactam and piperacillin-tazobactam. In terms of biological role, catalyzes cross-linking of the peptidoglycan cell wall. Involved in the determination of the rod shape of the cell. The polypeptide is Peptidoglycan D,D-transpeptidase MrdA (Acinetobacter baumannii (strain ATCC 19606 / DSM 30007 / JCM 6841 / CCUG 19606 / CIP 70.34 / NBRC 109757 / NCIMB 12457 / NCTC 12156 / 81)).